We begin with the raw amino-acid sequence, 297 residues long: Thiosulfate sulfurtransferase (297 aa).

Lysine 14 bears the N6-acetyllysine; alternate mark. Lysine 14 is modified (N6-succinyllysine; alternate). Positions 25 to 143 (LGPSLRVLDA…WLKEGHPVTS (119 aa)) constitute a Rhodanese 1 domain. O-linked (GlcNAc) serine glycosylation is present at serine 35. At serine 38 the chain carries Phosphoserine. An N6-acetyllysine; alternate modification is found at lysine 136. Lysine 136 bears the N6-succinyllysine; alternate mark. The segment at 144-159 (EPSRPEPAVFKATLNL) is hinge. Lysine 163 is modified (N6-acetyllysine). A Rhodanese 2 domain is found at 173–288 (QSKRFQLVDS…WFRRAPPETR (116 aa)). Lysine 175 is modified (N6-acetyllysine; alternate). Residue lysine 175 is modified to N6-succinyllysine; alternate. Arginine 187 is a binding site for substrate. N6-acetyllysine; alternate occurs at positions 219 and 224. An N6-succinyllysine; alternate mark is found at lysine 219 and lysine 224. Position 236 is an N6-acetyllysine (lysine 236). N6-acetyllysine; alternate is present on lysine 237. Lysine 237 carries the N6-succinyllysine; alternate modification. The active-site Cysteine persulfide intermediate is the cysteine 248. Lysine 250 contacts substrate.

Monomer. In terms of tissue distribution, expressed in numerous tissues.

It is found in the mitochondrion matrix. It catalyses the reaction thiosulfate + hydrogen cyanide = thiocyanate + sulfite + 2 H(+). Functionally, together with MRPL18, acts as a mitochondrial import factor for the cytosolic 5S rRNA. Only the nascent unfolded cytoplasmic form is able to bind to the 5S rRNA. Formation of iron-sulfur complexes and cyanide detoxification. The protein is Thiosulfate sulfurtransferase (Tst) of Mus musculus (Mouse).